Here is a 110-residue protein sequence, read N- to C-terminus: Iron-sulfur cluster assembly protein CyaY (110 aa).

This sequence belongs to the frataxin family.

Its function is as follows. Involved in iron-sulfur (Fe-S) cluster assembly. May act as a regulator of Fe-S biogenesis. The protein is Iron-sulfur cluster assembly protein CyaY of Pseudomonas fluorescens (strain SBW25).